A 525-amino-acid polypeptide reads, in one-letter code: Histidine-rich glycoprotein (525 aa).

The signal sequence occupies residues 1 to 18; it reads MKVLTTALLLVTLQCSHA. The Cystatin 1 domain maps to 19–122; the sequence is LSPTNCDASE…ESQDLSVNGY (104 aa). Disulfide bonds link cysteine 24/cysteine 504, cysteine 78/cysteine 89, cysteine 103/cysteine 124, cysteine 201/cysteine 414, and cysteine 216/cysteine 239. Positions 41–84 are interaction with ATP5F1A; that stretch reads GRRSGYVFELLRVSDAHLDRAGTATVYYLALDVIESDCWVLSTK. Asparagine 112, asparagine 123, and asparagine 200 each carry an N-linked (GlcNAc...) asparagine glycan. Residues 135–240 enclose the Cystatin 2 domain; sequence NTKDSPVLLD…TPDSIDINCE (106 aa). The disordered stretch occupies residues 273-447; sequence GSRDHHHTHK…SRKRGPGKGL (175 aa). Residues 293–303 are compositionally biased toward basic and acidic residues; it reads EGKDNSDRPRL. Asparagine 322 and asparagine 330 each carry an N-linked (GlcNAc...) asparagine glycan. The segment covering 339-404 has biased composition (basic residues); sequence HGHRPHGHHP…GHHPHGHHPH (66 aa). Positions 345-379 are necessary for endothelial cell focal adhesions and anti-angiogenic activities; it reads GHHPHSHHPPGHHSHGHHPHGHHPHSHHSHGHHPP. At serine 438 the chain carries Phosphoserine.

As to quaternary structure, interacts with THBS1 (via the TSP type I repeats); the interaction blocks the antiangiogenic effect of THBS1 with CD36. Interacts with HPSE; the interaction is enhanced at acidic pH, partially inhibits binding of HPSE to cell surface receptors and modulates its enzymatic activity. Interacts (via the HRR domain) with TMP1; the interaction partially mediates the antiangiogenic properties of HRG. Interacts with kappa and lambda light chains of IgG molecules. Interacts with ATP5F1A; the interaction occurs on the surface of T-cells and alters their cell morphology in concert with CONA. Binds IgG molecules containing kappa and lambda light chains and inhibits the formation of insoluble immunoglobulin complexes. Interacts with F12; the interaction, which is enhanced in the presence of zinc ions and inhibited by heparin-binding to HRG, inhibits factor XII autoactivation and contact-initiated coagulation. Interacts with PLG (via its Kringle domains); the interaction tethers PLG to the cell surface and enhances its activation. Interacts (via the HRR domain) with TPM1; the interaction appears to contribute to the antiangiogenic properties of the HRR domain. Interacts with THBS2; the interaction blocks the antiangiogenic effect of THBS2 with CD36. It depends on Zn(2+) as a cofactor. In terms of processing, proteolytic cleavage produces several HRG fragments which are mostly disulfide-linked and, therefore, not released. Cleavage by plasmin is inhibited in the presence of heparin, zinc ions or in an acidic environment. Cleavage reduces binding of HRG to heparan sulfate, but enhances the ability of HRG to bind and tether plasminogen to the cell surface. On platelet activation, releases a 33 kDa antiangiogenic peptide which encompasses the HRR. Also cleaved in the C-terminal by plasmin. Post-translationally, N-glycosylated. Expressed in liver, blood plasma, serum and in platelets. Also present in fibrin clots, wound fluid from acute wounds and chronic leg ulcers.

Its subcellular location is the secreted. Its function is as follows. Plasma glycoprotein that binds a number of ligands such as heme, heparin, heparan sulfate, thrombospondin, plasminogen, and divalent metal ions. Binds heparin and heparin/glycosaminoglycans in a zinc-dependent manner. Binds heparan sulfate on the surface of liver, lung, kidney and heart endothelial cells. Binds to N-sulfated polysaccharide chains on the surface of liver endothelial cells. Inhibits rosette formation. Acts as an adapter protein and is implicated in regulating many processes such as immune complex and pathogen clearance, cell chemotaxis, cell adhesion, angiogenesis, coagulation and fibrinolysis. Mediates clearance of necrotic cells through enhancing the phagocytosis of necrotic cells in a heparan sulfate-dependent pathway. This process can be regulated by the presence of certain HRG ligands such as heparin and zinc ions. Binds to IgG subclasses of immunoglobins containing kappa and lambda light chains with different affinities regulating their clearance and inhibiting the formation of insoluble immune complexes. Tethers plasminogen to the cell surface. Binds T-cells and alters the cell morphology. Acts as a regulator of the vascular endothelial growth factor (VEGF) signaling pathway; inhibits endothelial cell motility by reducing VEGF-induced complex formation between PXN/paxillin and ILK/integrin-linked protein kinase and by promoting inhibition of VEGF-induced tyrosine phosphorylation of focal adhesion kinases and alpha-actinins in endothelial cells. Also plays a role in the regulation of tumor angiogenesis and tumor immune surveillance. Normalizes tumor vessels and promotes antitumor immunity by polarizing tumor-associated macrophages, leading to decreased tumor growth and metastasis. Modulates angiogenesis by blocking the CD6-mediated antiangiongenic effect of thrombospondins, THBS1 and THBS2. This Mus musculus (Mouse) protein is Histidine-rich glycoprotein (Hrg).